A 575-amino-acid polypeptide reads, in one-letter code: Urease subunit alpha (575 aa).

A Urease domain is found at 138 to 575; it reads GAVDCHVHLI…LPMAQRYFLF (438 aa). 3 residues coordinate Ni(2+): histidine 143, histidine 145, and lysine 226. N6-carboxylysine is present on lysine 226. Position 228 (histidine 228) interacts with substrate. The Ni(2+) site is built by histidine 255 and histidine 281. The active-site Proton donor is the histidine 329. Aspartate 369 contributes to the Ni(2+) binding site.

It belongs to the metallo-dependent hydrolases superfamily. Urease alpha subunit family. In terms of assembly, heterotrimer of UreA (gamma), UreB (beta) and UreC (alpha) subunits. Three heterotrimers associate to form the active enzyme. The cofactor is Ni cation. In terms of processing, carboxylation allows a single lysine to coordinate two nickel ions.

It localises to the cytoplasm. The enzyme catalyses urea + 2 H2O + H(+) = hydrogencarbonate + 2 NH4(+). It functions in the pathway nitrogen metabolism; urea degradation; CO(2) and NH(3) from urea (urease route): step 1/1. The sequence is that of Urease subunit alpha from Frankia alni (strain DSM 45986 / CECT 9034 / ACN14a).